The sequence spans 748 residues: Protein REPRESSOR OF SILENCING 3 (748 aa).

One can recognise an RRM domain in the interval 10-86; it reads VRLHVGGLGE…GRLRLEKAKE (77 aa). 4 disordered regions span residues 244–318, 350–531, 579–600, and 729–748; these read KSIL…QSID, GSSK…VSDT, VDEE…GGSS, and EWAK…NSEE. The segment covering 266–288 has biased composition (polar residues); sequence THPSKNRQTISLEETGRQESSQA. The segment covering 294 to 314 has biased composition (basic and acidic residues); that stretch reads KPSEVVPDKSSDEPSRTKDLE. Residues 373 to 382 are compositionally biased toward basic residues; the sequence is LKKKTKRKRV. 3 stretches are compositionally biased toward acidic residues: residues 403–416, 439–472, and 491–518; these read DTMA…DSDA, DDSD…DAVE, and ESDD…DVGS. Positions 520–531 are enriched in polar residues; that stretch reads DSGSLADTVSDT.

In terms of tissue distribution, ubiquitously expressed.

The protein localises to the nucleus. Its subcellular location is the nucleolus. It localises to the nucleoplasm. In terms of biological role, RNA-binding protein required for DNA demethylation and to eluviate siRNA-mediated transcriptional gene silencing (TGS), probably by guiding ROS1. Can bind specifically single stranded G-rich RNAs of 21-, 24- or 26-nt corresponding to promoter sequence of target genes; this interaction directs demethylation of target sequences. This is Protein REPRESSOR OF SILENCING 3 from Arabidopsis thaliana (Mouse-ear cress).